The primary structure comprises 327 residues: UPF0285 protein Maeo_0978 (327 aa).

This sequence belongs to the UPF0285 family.

This Methanococcus aeolicus (strain ATCC BAA-1280 / DSM 17508 / OCM 812 / Nankai-3) protein is UPF0285 protein Maeo_0978.